The following is an 837-amino-acid chain: Phenylalanine--tRNA ligase beta subunit (837 aa).

A tRNA-binding domain is found at 39 to 149; sequence SASLEGIVTG…EMNIAIPKIG (111 aa). The 106-residue stretch at 415–520 folds into the B5 domain; sequence IEEQLLLLRR…RLIGYDRFDS (106 aa). Residues aspartate 498, aspartate 504, glutamate 507, and glutamate 508 each contribute to the Mg(2+) site. Positions 743-836 constitute an FDX-ACB domain; that stretch reads PTVPSMERDI…LKVEFSAELR (94 aa).

Belongs to the phenylalanyl-tRNA synthetase beta subunit family. Type 1 subfamily. As to quaternary structure, tetramer of two alpha and two beta subunits. Requires Mg(2+) as cofactor.

It is found in the cytoplasm. It carries out the reaction tRNA(Phe) + L-phenylalanine + ATP = L-phenylalanyl-tRNA(Phe) + AMP + diphosphate + H(+). This Prochlorococcus marinus (strain SARG / CCMP1375 / SS120) protein is Phenylalanine--tRNA ligase beta subunit.